The sequence spans 36 residues: Photosystem I reaction center subunit VIII (36 aa).

A helical transmembrane segment spans residues 9–29; the sequence is IFVPLVGLVFPAVAMASLFLY.

Belongs to the PsaI family.

The protein resides in the plastid. It localises to the chloroplast thylakoid membrane. May help in the organization of the PsaL subunit. The chain is Photosystem I reaction center subunit VIII from Ostreococcus tauri.